The chain runs to 460 residues: ATP synthase subunit beta (460 aa).

An ATP-binding site is contributed by 148–155 (GGAGVGKT).

Belongs to the ATPase alpha/beta chains family. As to quaternary structure, F-type ATPases have 2 components, CF(1) - the catalytic core - and CF(0) - the membrane proton channel. CF(1) has five subunits: alpha(3), beta(3), gamma(1), delta(1), epsilon(1). CF(0) has three main subunits: a(1), b(2) and c(9-12). The alpha and beta chains form an alternating ring which encloses part of the gamma chain. CF(1) is attached to CF(0) by a central stalk formed by the gamma and epsilon chains, while a peripheral stalk is formed by the delta and b chains.

The protein localises to the cell inner membrane. It catalyses the reaction ATP + H2O + 4 H(+)(in) = ADP + phosphate + 5 H(+)(out). Its function is as follows. Produces ATP from ADP in the presence of a proton gradient across the membrane. The catalytic sites are hosted primarily by the beta subunits. This chain is ATP synthase subunit beta, found in Alcanivorax borkumensis (strain ATCC 700651 / DSM 11573 / NCIMB 13689 / SK2).